Consider the following 211-residue polypeptide: Large ribosomal subunit protein uL3 (211 aa).

This sequence belongs to the universal ribosomal protein uL3 family. As to quaternary structure, part of the 50S ribosomal subunit. Forms a cluster with proteins L14 and L19.

Its function is as follows. One of the primary rRNA binding proteins, it binds directly near the 3'-end of the 23S rRNA, where it nucleates assembly of the 50S subunit. The sequence is that of Large ribosomal subunit protein uL3 from Halothermothrix orenii (strain H 168 / OCM 544 / DSM 9562).